We begin with the raw amino-acid sequence, 312 residues long: Ribosomal RNA small subunit methyltransferase H (312 aa).

S-adenosyl-L-methionine is bound by residues 35–37 (GGH), Asp-55, Phe-79, Asp-101, and Gln-108.

It belongs to the methyltransferase superfamily. RsmH family.

The protein resides in the cytoplasm. The enzyme catalyses cytidine(1402) in 16S rRNA + S-adenosyl-L-methionine = N(4)-methylcytidine(1402) in 16S rRNA + S-adenosyl-L-homocysteine + H(+). Its function is as follows. Specifically methylates the N4 position of cytidine in position 1402 (C1402) of 16S rRNA. This is Ribosomal RNA small subunit methyltransferase H from Buchnera aphidicola subsp. Acyrthosiphon pisum (strain APS) (Acyrthosiphon pisum symbiotic bacterium).